We begin with the raw amino-acid sequence, 232 residues long: Transcriptional regulatory protein CpxR (232 aa).

Residues 3–115 form the Response regulatory domain; that stretch reads KILLVDDDRE…ELVARIRAIL (113 aa). Asp-51 carries the post-translational modification 4-aspartylphosphate. The segment at residues 131-230 is a DNA-binding region (ompR/PhoB-type); the sequence is SPTLEVDALV…LRGRGYLMVS (100 aa).

Phosphorylated by CpxA.

Its subcellular location is the cytoplasm. Its function is as follows. Member of the two-component regulatory system CpxA/CpxR. This system combats a variety of extracytoplasmic protein-mediated toxicities. It performs this function by increasing the synthesis of the periplasmic protease, DegP as well as that of CpxP protein. The protein is Transcriptional regulatory protein CpxR (cpxR) of Escherichia coli O157:H7.